The sequence spans 387 residues: Zinc homeostasis factor 1 (387 aa).

4 helical membrane passes run 10-30 (IILL…TGYA), 34-54 (LALI…LVAL), 77-97 (EILG…FIFM), and 113-133 (TLMF…IFLF). The segment covering 195–214 (SYTGNHNGAGTSKPVNNHGS) has biased composition (polar residues). A disordered region spans residues 195–221 (SYTGNHNGAGTSKPVNNHGSIEQDAPK). 2 helical membrane-spanning segments follow: residues 234-254 (FLHV…ALFI) and 263-283 (FLFD…SAIP).

Belongs to the cation diffusion facilitator (CDF) transporter (TC 2.A.4) family. SLC30A subfamily.

The protein resides in the endoplasmic reticulum membrane. The protein localises to the nucleus membrane. Its function is as follows. Involved in zinc homeostasis, where it plays a role in its accumulation in the endoplasmic reticulum/nucleus. Also has a role in the sequestration of cadmium into the endoplasmic reticulum. The protein is Zinc homeostasis factor 1 (zhf1) of Schizosaccharomyces pombe (strain 972 / ATCC 24843) (Fission yeast).